We begin with the raw amino-acid sequence, 247 residues long: uncharacterized protein (247 aa).

The next 2 helical transmembrane spans lie at 11 to 31 (LIAP…IYCV) and 39 to 59 (FIAI…TGLL).

The protein resides in the cell membrane. This is an uncharacterized protein from Haemophilus influenzae (strain ATCC 51907 / DSM 11121 / KW20 / Rd).